The chain runs to 161 residues: RNA pyrophosphohydrolase (161 aa).

In terms of domain architecture, Nudix hydrolase spans 12-154 (PYRPGVGMMI…KRKLYQAVVK (143 aa)). The short motif at 46 to 67 (GGIVPGETPSIAAMREMLEEIG) is the Nudix box element.

This sequence belongs to the Nudix hydrolase family. RppH subfamily. Requires a divalent metal cation as cofactor.

Accelerates the degradation of transcripts by removing pyrophosphate from the 5'-end of triphosphorylated RNA, leading to a more labile monophosphorylated state that can stimulate subsequent ribonuclease cleavage. This Rickettsia canadensis (strain McKiel) protein is RNA pyrophosphohydrolase.